The sequence spans 619 residues: Type VI secretion system component TssF1 (619 aa).

In terms of assembly, interacts with TssA1.

Its function is as follows. Core component of the H1 type VI (H1-T6SS) secretion system that plays a role in the release of toxins targeting both eukaryotic and prokaryotic species. The polypeptide is Type VI secretion system component TssF1 (Pseudomonas aeruginosa (strain ATCC 15692 / DSM 22644 / CIP 104116 / JCM 14847 / LMG 12228 / 1C / PRS 101 / PAO1)).